Here is a 146-residue protein sequence, read N- to C-terminus: UPF0735 ACT domain-containing protein CHY_1913 (146 aa).

Residues 70–145 enclose the ACT domain; sequence TLALNLEHRA…GVSKVELVGQ (76 aa).

The protein belongs to the UPF0735 family.

In Carboxydothermus hydrogenoformans (strain ATCC BAA-161 / DSM 6008 / Z-2901), this protein is UPF0735 ACT domain-containing protein CHY_1913.